The sequence spans 76 residues: ATP synthase subunit 9, mitochondrial (76 aa).

The next 2 membrane-spanning stretches (helical) occupy residues 13 to 35 (GIST…ALIQ) and 50 to 72 (FAIL…SFLL).

The protein belongs to the ATPase C chain family. In terms of assembly, F-type ATPases have 2 components, CF(1) - the catalytic core - and CF(0) - the membrane proton channel. In yeast, the dimeric form of ATP synthase consists of 18 polypeptides: alpha, beta, gamma, delta, epsilon, 4 (B), 5 (OSCP), 6 (A), 8, 9 (C), d, E (Tim11), f, g, h, i, j and k.

The protein localises to the mitochondrion membrane. In terms of biological role, mitochondrial membrane ATP synthase (F(1)F(0) ATP synthase or Complex V) produces ATP from ADP in the presence of a proton gradient across the membrane which is generated by electron transport complexes of the respiratory chain. F-type ATPases consist of two structural domains, F(1) - containing the extramembraneous catalytic core and F(0) - containing the membrane proton channel, linked together by a central stalk and a peripheral stalk. During catalysis, ATP synthesis in the catalytic domain of F(1) is coupled via a rotary mechanism of the central stalk subunits to proton translocation. Part of the complex F(0) domain. A homomeric c-ring of probably 10 subunits is part of the complex rotary element. This chain is ATP synthase subunit 9, mitochondrial (ATP9), found in Eremothecium gossypii (strain ATCC 10895 / CBS 109.51 / FGSC 9923 / NRRL Y-1056) (Yeast).